We begin with the raw amino-acid sequence, 471 residues long: Phosphatidylinositol 4-kinase type 2-alpha (471 aa).

2 disordered regions span residues 1–25 and 48–101; these read MDETSPLVSPDRDQTDYSYQSQCSP and PGSA…PDDP. Residues 90–101 are compositionally biased toward basic and acidic residues; it reads AERERNKFPDDP. A PI3K/PI4K catalytic domain is found at 117–445; it reads DILPERISQG…VQTPPVIVET (329 aa). The G-loop stretch occupies residues 123 to 129; the sequence is ISQGSSG. Residues 124-130 and Lys-145 contribute to the ATP site; that span reads SQGSSGS. An important for substrate binding region spans residues 150–152; sequence EPY. Residues 158-171 form an important for interaction with membranes region; that stretch reads KWTKWLQKLCCPCC. Residues Cys-167, Cys-168, Cys-170, and Cys-171 are each lipidated (S-palmitoyl cysteine). 254–257 is a binding site for ATP; the sequence is QLFV. The segment at 261 to 269 is important for interaction with membranes; sequence KDADYWLRR. Positions 298–306 are catalytic loop; sequence RNTDRGNDN. The tract at residues 336–356 is activation loop; it reads AIDNGLAFPLKHPDSWRAYPF. Asp-338 serves as a coordination point for ATP. The segment at 351–360 is important for interaction with membranes; that stretch reads WRAYPFYWAW.

It belongs to the PI3/PI4-kinase family. Type II PI4K subfamily.

It localises to the golgi apparatus. The protein localises to the trans-Golgi network membrane. Its subcellular location is the membrane raft. The protein resides in the endosome. It is found in the endosome membrane. It localises to the cytoplasmic vesicle. The protein localises to the cell projection. Its subcellular location is the dendrite. The protein resides in the presynaptic cell membrane. It is found in the synapse. It localises to the synaptosome. The protein localises to the mitochondrion. Its subcellular location is the membrane. The protein resides in the cell membrane. It is found in the perikaryon. It localises to the neuron projection. It carries out the reaction a 1,2-diacyl-sn-glycero-3-phospho-(1D-myo-inositol) + ATP = a 1,2-diacyl-sn-glycero-3-phospho-(1D-myo-inositol 4-phosphate) + ADP + H(+). Membrane-bound phosphatidylinositol-4 kinase (PI4-kinase) that catalyzes the phosphorylation of phosphatidylinositol (PI) to phosphatidylinositol 4-phosphate (PI4P), a lipid that plays important roles in endocytosis, Golgi function, protein sorting and membrane trafficking. Besides, phosphorylation of phosphatidylinositol (PI) to phosphatidylinositol 4-phosphate (PI4P) is the first committed step in the generation of phosphatidylinositol 4,5-bisphosphate (PIP2), a precursor of the second messenger inositol 1,4,5-trisphosphate (InsP3). The protein is Phosphatidylinositol 4-kinase type 2-alpha (pi4k2a) of Xenopus tropicalis (Western clawed frog).